A 227-amino-acid chain; its full sequence is AN1-type zinc finger protein 3 (227 aa).

Residues 12 to 44 (PSLPPRCPCGFWGSSKTMNLCSKCFADFQKKQP) form an A20-type zinc finger. Residues cysteine 18, cysteine 20, cysteine 32, and cysteine 35 each coordinate Zn(2+). Disordered regions lie at residues 41–100 (KKQP…EECG) and 113–148 (PTKRSCGTDSQSENEASPVKRPRLLENTERSEETSR). The segment covering 49–59 (APSTSNSQSDL) has biased composition (polar residues). The span at 66 to 77 (SDNNNTSITTPT) shows a compositional bias: low complexity. 2 stretches are compositionally biased toward polar residues: residues 78–94 (LSPSQQPLPTELNVTSP) and 113–127 (PTKRSCGTDSQSENE). Residues 135–148 (RLLENTERSEETSR) show a composition bias toward basic and acidic residues. The AN1-type zinc finger occupies 151 to 200 (QKSRRRCFQCQTKLELVQQELGSCRCGYVFCMLHRLPEQHDCTFDHMGRG). Zn(2+) contacts are provided by cysteine 157, cysteine 160, cysteine 174, cysteine 176, cysteine 181, histidine 184, histidine 190, and cysteine 192.

This Homo sapiens (Human) protein is AN1-type zinc finger protein 3 (ZFAND3).